Here is a 561-residue protein sequence, read N- to C-terminus: Dihydroxy-acid dehydratase (561 aa).

C50 provides a ligand contact to [2Fe-2S] cluster. D82 is a binding site for Mg(2+). C123 contacts [2Fe-2S] cluster. Mg(2+) is bound by residues D124 and K125. K125 is modified (N6-carboxylysine). Position 195 (C195) interacts with [2Fe-2S] cluster. Residue E447 participates in Mg(2+) binding. Catalysis depends on S473, which acts as the Proton acceptor.

Belongs to the IlvD/Edd family. Homodimer. [2Fe-2S] cluster is required as a cofactor. Requires Mg(2+) as cofactor.

It catalyses the reaction (2R)-2,3-dihydroxy-3-methylbutanoate = 3-methyl-2-oxobutanoate + H2O. The catalysed reaction is (2R,3R)-2,3-dihydroxy-3-methylpentanoate = (S)-3-methyl-2-oxopentanoate + H2O. The protein operates within amino-acid biosynthesis; L-isoleucine biosynthesis; L-isoleucine from 2-oxobutanoate: step 3/4. It participates in amino-acid biosynthesis; L-valine biosynthesis; L-valine from pyruvate: step 3/4. Functionally, functions in the biosynthesis of branched-chain amino acids. Catalyzes the dehydration of (2R,3R)-2,3-dihydroxy-3-methylpentanoate (2,3-dihydroxy-3-methylvalerate) into 2-oxo-3-methylpentanoate (2-oxo-3-methylvalerate) and of (2R)-2,3-dihydroxy-3-methylbutanoate (2,3-dihydroxyisovalerate) into 2-oxo-3-methylbutanoate (2-oxoisovalerate), the penultimate precursor to L-isoleucine and L-valine, respectively. In Trichodesmium erythraeum (strain IMS101), this protein is Dihydroxy-acid dehydratase.